A 290-amino-acid polypeptide reads, in one-letter code: MSAQLLEGKVVAAAVLEDVARRVAVLKDKGISPGLGTILVGDDGPSVSYVNKKRETCKQVGIASFHNEIPASATQSDLLAAVRDFNDSPDVDAYIIQYPLPKGFDFNEALNLMLPEKDADGLHPVNLGRLVLQEPGPVPCTPAGIRAMLQHYDIAIEGKEVVVIGRGPTLGRPLSLLLTLKQPYANAAVTVVHSGIKDLGAYTRRADIVIAAAGCPGIVQPDMIRPGAVVISGGISWEGRKLLPDVDEAVGEVAGWITPRLGGVGPTTVAMLLLNTVQAAEERARRAGKL.

Residues 165–167, S194, and I235 contribute to the NADP(+) site; that span reads GRG.

This sequence belongs to the tetrahydrofolate dehydrogenase/cyclohydrolase family. Homodimer.

The catalysed reaction is (6R)-5,10-methylene-5,6,7,8-tetrahydrofolate + NADP(+) = (6R)-5,10-methenyltetrahydrofolate + NADPH. It catalyses the reaction (6R)-5,10-methenyltetrahydrofolate + H2O = (6R)-10-formyltetrahydrofolate + H(+). It participates in one-carbon metabolism; tetrahydrofolate interconversion. Its function is as follows. Catalyzes the oxidation of 5,10-methylenetetrahydrofolate to 5,10-methenyltetrahydrofolate and then the hydrolysis of 5,10-methenyltetrahydrofolate to 10-formyltetrahydrofolate. This is Bifunctional protein FolD from Syntrophotalea carbinolica (strain DSM 2380 / NBRC 103641 / GraBd1) (Pelobacter carbinolicus).